A 415-amino-acid chain; its full sequence is Beta-1,4-glucuronyltransferase 1 (415 aa).

Residues 1–8 are Cytoplasmic-facing; it reads MQMSYAIR. Residues 9–36 form a helical; Signal-anchor for type II membrane protein membrane-spanning segment; the sequence is CAFYQLLLAALMLVAMLQLLYLSLLSGL. Residues 37-415 lie on the Lumenal side of the membrane; the sequence is HGQEEQDQYF…AKYPNSPRRC (379 aa). N204 carries an N-linked (GlcNAc...) asparagine glycan. 2 residues coordinate Mn(2+): D227 and D229. The N-linked (GlcNAc...) asparagine glycan is linked to N300.

It belongs to the glycosyltransferase 49 family. In terms of assembly, interacts with LARGE1 and LARGE2. Requires Mn(2+) as cofactor. As to expression, in the adult, highly expressed in heart, brain, skeletal muscle and kidney and to a lesser extent in placenta, pancreas, spleen, prostate, testis, ovary, small intestine and colon. Very weak expression in lung, liver, thymus and peripheral blood leukocytes. In fetal highly expressed in brain and kidney and to a lesser extent in lung and liver.

Its subcellular location is the golgi apparatus membrane. It catalyses the reaction 3-O-[beta-D-Xyl-(1-&gt;4)-Rib-ol-P-Rib-ol-P-3-beta-D-GalNAc-(1-&gt;3)-beta-D-GlcNAc-(1-&gt;4)-(O-6-P-alpha-D-Man)]-Thr-[protein] + UDP-alpha-D-glucuronate = 3-O-[beta-D-GlcA-(1-&gt;3)-beta-D-Xyl-(1-&gt;4)-Rib-ol-P-Rib-ol-P-3-beta-D-GalNAc-(1-&gt;3)-beta-D-GlcNAc-(1-&gt;4)-(O-6-P-alpha-D-Man)]-Thr-[protein] + UDP + H(+). Its pathway is protein modification; protein glycosylation. Functionally, beta-1,4-glucuronyltransferase involved in O-mannosylation of alpha-dystroglycan (DAG1). Transfers a glucuronic acid (GlcA) residue onto a xylose (Xyl) acceptor to produce the glucuronyl-beta-1,4-xylose-beta disaccharide primer, which is further elongated by LARGE1, during synthesis of phosphorylated O-mannosyl glycan. Phosphorylated O-mannosyl glycan is a carbohydrate structure present in alpha-dystroglycan (DAG1), which is required for binding laminin G-like domain-containing extracellular proteins with high affinity. Required for axon guidance; via its function in O-mannosylation of alpha-dystroglycan (DAG1). The protein is Beta-1,4-glucuronyltransferase 1 of Homo sapiens (Human).